A 259-amino-acid polypeptide reads, in one-letter code: MSTEKTKILEVKNLKAQVDGTEILKGVNLTINSGEIHAIMGPNGSGKSTFSKILAGHPAYQVTGGEILFKNKNLLELEPEERARAGVFLAFQYPIEIAGVSNIDFLRLAYNNRRKEEGLTELDPLTFYSIVKEKLNVVKMDPHFLNRNVNEGFSGGEKKRNEILQMALLNPSLAILDETDSGLDIDALRIVAEGVNQLSNKENSIILITHYQRLLDYIVPDYIHVMQNGRILKTGGAELAKELEIKGYDWLNELEMVKK.

In terms of domain architecture, ABC transporter spans Leu-9–Glu-253. Gly-41–Ser-48 is an ATP binding site.

The protein belongs to the ABC transporter superfamily. Ycf16 family.

It localises to the plastid. The protein resides in the cyanelle. This Cyanophora paradoxa protein is Probable ATP-dependent transporter ycf16 (ycf16).